Here is a 172-residue protein sequence, read N- to C-terminus: Large ribosomal subunit protein uL10 (172 aa).

It belongs to the universal ribosomal protein uL10 family. In terms of assembly, part of the ribosomal stalk of the 50S ribosomal subunit. The N-terminus interacts with L11 and the large rRNA to form the base of the stalk. The C-terminus forms an elongated spine to which L12 dimers bind in a sequential fashion forming a multimeric L10(L12)X complex.

Functionally, forms part of the ribosomal stalk, playing a central role in the interaction of the ribosome with GTP-bound translation factors. The protein is Large ribosomal subunit protein uL10 of Ruegeria pomeroyi (strain ATCC 700808 / DSM 15171 / DSS-3) (Silicibacter pomeroyi).